A 487-amino-acid polypeptide reads, in one-letter code: Glutamyl-tRNA(Gln) amidotransferase subunit A (487 aa).

Residues K79 and S158 each act as charge relay system in the active site. The active-site Acyl-ester intermediate is the S182.

This sequence belongs to the amidase family. GatA subfamily. In terms of assembly, heterotrimer of A, B and C subunits.

It carries out the reaction L-glutamyl-tRNA(Gln) + L-glutamine + ATP + H2O = L-glutaminyl-tRNA(Gln) + L-glutamate + ADP + phosphate + H(+). Allows the formation of correctly charged Gln-tRNA(Gln) through the transamidation of misacylated Glu-tRNA(Gln) in organisms which lack glutaminyl-tRNA synthetase. The reaction takes place in the presence of glutamine and ATP through an activated gamma-phospho-Glu-tRNA(Gln). This Ehrlichia canis (strain Jake) protein is Glutamyl-tRNA(Gln) amidotransferase subunit A.